A 310-amino-acid polypeptide reads, in one-letter code: Ribosomal RNA small subunit methyltransferase H (310 aa).

Residues 33 to 35, Asp52, Phe79, Asp98, and Gln105 contribute to the S-adenosyl-L-methionine site; that span reads GGH.

Belongs to the methyltransferase superfamily. RsmH family.

The protein localises to the cytoplasm. It catalyses the reaction cytidine(1402) in 16S rRNA + S-adenosyl-L-methionine = N(4)-methylcytidine(1402) in 16S rRNA + S-adenosyl-L-homocysteine + H(+). Functionally, specifically methylates the N4 position of cytidine in position 1402 (C1402) of 16S rRNA. This chain is Ribosomal RNA small subunit methyltransferase H, found in Campylobacter jejuni subsp. doylei (strain ATCC BAA-1458 / RM4099 / 269.97).